A 374-amino-acid chain; its full sequence is Alanine racemase (374 aa).

K34 acts as the Proton acceptor; specific for D-alanine in catalysis. The residue at position 34 (K34) is an N6-(pyridoxal phosphate)lysine. Position 147 (R147) interacts with substrate. Y271 functions as the Proton acceptor; specific for L-alanine in the catalytic mechanism. M319 serves as a coordination point for substrate.

The protein belongs to the alanine racemase family. Pyridoxal 5'-phosphate is required as a cofactor.

The enzyme catalyses L-alanine = D-alanine. It participates in amino-acid biosynthesis; D-alanine biosynthesis; D-alanine from L-alanine: step 1/1. Its function is as follows. Catalyzes the interconversion of L-alanine and D-alanine. May also act on other amino acids. This is Alanine racemase (alr) from Actinobacillus pleuropneumoniae serotype 5b (strain L20).